We begin with the raw amino-acid sequence, 480 residues long: Protein nucleotidyltransferase YdiU (480 aa).

The ATP site is built by Gly86, Gly88, Arg89, Lys109, Asp121, Gly122, Arg172, and Arg179. Residue Asp248 is the Proton acceptor of the active site. Positions 249 and 258 each coordinate Mg(2+). Asp258 contacts ATP.

This sequence belongs to the SELO family. Mg(2+) is required as a cofactor. Requires Mn(2+) as cofactor.

It carries out the reaction L-seryl-[protein] + ATP = 3-O-(5'-adenylyl)-L-seryl-[protein] + diphosphate. The catalysed reaction is L-threonyl-[protein] + ATP = 3-O-(5'-adenylyl)-L-threonyl-[protein] + diphosphate. It catalyses the reaction L-tyrosyl-[protein] + ATP = O-(5'-adenylyl)-L-tyrosyl-[protein] + diphosphate. The enzyme catalyses L-histidyl-[protein] + UTP = N(tele)-(5'-uridylyl)-L-histidyl-[protein] + diphosphate. It carries out the reaction L-seryl-[protein] + UTP = O-(5'-uridylyl)-L-seryl-[protein] + diphosphate. The catalysed reaction is L-tyrosyl-[protein] + UTP = O-(5'-uridylyl)-L-tyrosyl-[protein] + diphosphate. Nucleotidyltransferase involved in the post-translational modification of proteins. It can catalyze the addition of adenosine monophosphate (AMP) or uridine monophosphate (UMP) to a protein, resulting in modifications known as AMPylation and UMPylation. This chain is Protein nucleotidyltransferase YdiU, found in Salmonella paratyphi B (strain ATCC BAA-1250 / SPB7).